A 494-amino-acid chain; its full sequence is Glutamyl-tRNA(Gln) amidotransferase subunit A (494 aa).

Catalysis depends on charge relay system residues lysine 79 and serine 159. The active-site Acyl-ester intermediate is serine 183.

Belongs to the amidase family. GatA subfamily. In terms of assembly, heterotrimer of A, B and C subunits.

It carries out the reaction L-glutamyl-tRNA(Gln) + L-glutamine + ATP + H2O = L-glutaminyl-tRNA(Gln) + L-glutamate + ADP + phosphate + H(+). In terms of biological role, allows the formation of correctly charged Gln-tRNA(Gln) through the transamidation of misacylated Glu-tRNA(Gln) in organisms which lack glutaminyl-tRNA synthetase. The reaction takes place in the presence of glutamine and ATP through an activated gamma-phospho-Glu-tRNA(Gln). In Bartonella bacilliformis (strain ATCC 35685 / KC583 / Herrer 020/F12,63), this protein is Glutamyl-tRNA(Gln) amidotransferase subunit A.